The sequence spans 420 residues: Serine/threonine-protein kinase PCRK2 (420 aa).

The disordered stretch occupies residues 1–64 (MKCFLFPLGD…SNTSMSAREN (64 aa)). The span at 22-36 (SPTSNFSDVNKSGSD) shows a compositional bias: polar residues. Positions 42-58 (VSGTSTVSSTGRNSNTS) are enriched in low complexity. The residue at position 70 (threonine 70) is a Phosphothreonine. The Protein kinase domain occupies 81 to 366 (FSRSGMIGEG…EVLEMVTKIV (286 aa)). Residues 87 to 95 (IGEGGFGCV) and lysine 115 contribute to the ATP site. Residue tyrosine 164 is modified to Phosphotyrosine. The Proton acceptor role is filled by aspartate 215. Residues serine 219 and serine 249 each carry the phosphoserine modification. Phosphothreonine is present on residues threonine 250 and threonine 255. A Phosphotyrosine modification is found at tyrosine 263. The disordered stretch occupies residues 369–396 (SSPGNGGKKPQLVPLKSQETSRVEEGKN). Residues 387–396 (ETSRVEEGKN) are compositionally biased toward basic and acidic residues.

This sequence belongs to the protein kinase superfamily. Ser/Thr protein kinase family. As to quaternary structure, interacts with FLS2.

It localises to the cell membrane. It catalyses the reaction L-seryl-[protein] + ATP = O-phospho-L-seryl-[protein] + ADP + H(+). It carries out the reaction L-threonyl-[protein] + ATP = O-phospho-L-threonyl-[protein] + ADP + H(+). Functions redundantly with PCRK1 in basal resistance against bacterial pathogens and in regulation of plant immunity. Functions together with PCRK1 downstream of the pathogen-associated molecular pattern (PAMP) receptor FLS2. Contributes to the induction of SARD1 and CBP60G, which are transcriptional activator of ICS1, an enzyme involved in salicylate (SA) biosynthesis upon pathogen attack. This Arabidopsis thaliana (Mouse-ear cress) protein is Serine/threonine-protein kinase PCRK2.